The following is a 55-amino-acid chain: Large ribosomal subunit protein bL33 (55 aa).

The protein belongs to the bacterial ribosomal protein bL33 family.

The sequence is that of Large ribosomal subunit protein bL33 from Dehalococcoides mccartyi (strain ATCC BAA-2266 / KCTC 15142 / 195) (Dehalococcoides ethenogenes (strain 195)).